Consider the following 707-residue polypeptide: Polyribonucleotide nucleotidyltransferase (707 aa).

Residues Asp-486 and Asp-492 each contribute to the Mg(2+) site. The KH domain occupies 553–612; that stretch reads PRIHTIKINPEKIKDVIGKGGSVIRALTEETGTTIEIEDDGTVKIAATDGDKAKHAIRRI. An S1 motif domain is found at 622-690; sequence GRIYQGKVTR…RQGRVRLSIK (69 aa).

This sequence belongs to the polyribonucleotide nucleotidyltransferase family. In terms of assembly, component of the RNA degradosome, which is a multiprotein complex involved in RNA processing and mRNA degradation. It depends on Mg(2+) as a cofactor.

Its subcellular location is the cytoplasm. The catalysed reaction is RNA(n+1) + phosphate = RNA(n) + a ribonucleoside 5'-diphosphate. In terms of biological role, involved in mRNA degradation. Catalyzes the phosphorolysis of single-stranded polyribonucleotides processively in the 3'- to 5'-direction. The sequence is that of Polyribonucleotide nucleotidyltransferase from Edwardsiella ictaluri (strain 93-146).